The following is a 486-amino-acid chain: Monocarboxylate transporter 12 (486 aa).

Residues 1 to 9 (MTKITRVGS) are Cytoplasmic-facing. The next 6 membrane-spanning stretches (helical) occupy residues 10–30 (ASPP…LVTI), 58–78 (AWIH…GSVV), 86–106 (AGIM…SFAT), 115–135 (LGVL…AMVG), 148–168 (IAMS…QLLI), and 177–197 (LLIL…MRPI). Basic and acidic residues predominate over residues 201 to 220 (EDPSGPEKSHDRDAQREDCK). The interval 201–221 (EDPSGPEKSHDRDAQREDCKQ) is disordered. The next 6 helical transmembrane spans lie at 253–273 (FVVL…LFVY), 289–309 (AFLM…FGWL), 320–340 (YVCY…LPML), 353–373 (FGYF…EIVG), 383–403 (VVYF…GWLV), and 410–430 (TAAF…LGFA). The Cytoplasmic portion of the chain corresponds to 431 to 486 (KIAKRMKRTQVPFLVKDSDPKLHLWTNGSVAYSIAKELDQKDEESLAKARTGCNLT).

It belongs to the major facilitator superfamily. Monocarboxylate porter (TC 2.A.1.13) family. As to quaternary structure, interacts with isoform 2 of BSG; this interaction is required for its localization to the plasma membrane. Detected in kidney, choroid plexus, testis, lung, stomach, large and small intestine, spleen, fat and parotid gland. In eye, expressed in cornea, ciliary epithelium, lens epithelium and lens fiber.

The protein resides in the cell membrane. The protein localises to the basolateral cell membrane. The enzyme catalyses creatine(in) = creatine(out). It catalyses the reaction guanidinoacetate(in) = guanidinoacetate(out). Its activity is regulated as follows. Creatine uptake is inhibited by carbonyl cyanide 3-chlorophenylhydrazone (CCCP) and by valinomycin. In terms of biological role, functions as a transporter for creatine and as well for its precursor guanidinoacetate. Transport of creatine and GAA is independent of resting membrane potential and extracellular Na(+), Cl(-), or pH. Contributes to the process of creatine biosynthesis and distribution. The sequence is that of Monocarboxylate transporter 12 from Rattus norvegicus (Rat).